A 100-amino-acid polypeptide reads, in one-letter code: Urease subunit gamma (100 aa).

The protein belongs to the urease gamma subunit family. As to quaternary structure, heterotrimer of UreA (gamma), UreB (beta) and UreC (alpha) subunits. Three heterotrimers associate to form the active enzyme.

The protein resides in the cytoplasm. It carries out the reaction urea + 2 H2O + H(+) = hydrogencarbonate + 2 NH4(+). Its pathway is nitrogen metabolism; urea degradation; CO(2) and NH(3) from urea (urease route): step 1/1. This chain is Urease subunit gamma, found in Bradyrhizobium diazoefficiens (strain JCM 10833 / BCRC 13528 / IAM 13628 / NBRC 14792 / USDA 110).